Consider the following 70-residue polypeptide: Small ribosomal subunit protein bS21 (70 aa).

A compositionally biased stretch (basic residues) spans 48–61 (KLAAAVKRQSKRLR). Positions 48 to 70 (KLAAAVKRQSKRLRSQQLPPKMY) are disordered.

This sequence belongs to the bacterial ribosomal protein bS21 family.

The protein is Small ribosomal subunit protein bS21 of Thiobacillus denitrificans (strain ATCC 25259 / T1).